The following is a 262-amino-acid chain: 3-methyl-2-oxobutanoate hydroxymethyltransferase (262 aa).

Positions 44 and 83 each coordinate Mg(2+). 3-methyl-2-oxobutanoate is bound by residues 44-45, D83, and K113; that span reads DS. E115 provides a ligand contact to Mg(2+). Residue E182 is the Proton acceptor of the active site.

This sequence belongs to the PanB family. In terms of assembly, homodecamer; pentamer of dimers. Requires Mg(2+) as cofactor.

It localises to the cytoplasm. The catalysed reaction is 3-methyl-2-oxobutanoate + (6R)-5,10-methylene-5,6,7,8-tetrahydrofolate + H2O = 2-dehydropantoate + (6S)-5,6,7,8-tetrahydrofolate. It functions in the pathway cofactor biosynthesis; (R)-pantothenate biosynthesis; (R)-pantoate from 3-methyl-2-oxobutanoate: step 1/2. Its function is as follows. Catalyzes the reversible reaction in which hydroxymethyl group from 5,10-methylenetetrahydrofolate is transferred onto alpha-ketoisovalerate to form ketopantoate. The sequence is that of 3-methyl-2-oxobutanoate hydroxymethyltransferase from Picosynechococcus sp. (strain ATCC 27264 / PCC 7002 / PR-6) (Agmenellum quadruplicatum).